Here is a 356-residue protein sequence, read N- to C-terminus: Arginine kinase Lit v 2.0101 (356 aa).

The 83-residue stretch at 9 to 91 folds into the Phosphagen kinase N-terminal domain; sequence KLEAGFKKLE…FDPIIEDYHV (83 aa). 64–68 provides a ligand contact to L-arginine; sequence GVGIY. The Phosphagen kinase C-terminal domain maps to 119–356; that stretch reads FVISTRVRCG…LELIKIEKEM (238 aa). ATP-binding positions include 122-126 and His185; that span reads STRVR. Glu225 lines the L-arginine pocket. Arg229 contributes to the ATP binding site. Cys271 lines the L-arginine pocket. ATP contacts are provided by residues 280 to 284 and 309 to 314; these read RASVH and RGTRGE. Position 314 (Glu314) interacts with L-arginine.

Belongs to the ATP:guanido phosphotransferase family. Monomer. Muscle (at protein level).

The enzyme catalyses L-arginine + ATP = N(omega)-phospho-L-arginine + ADP + H(+). The catalysed reaction is dTDP + ATP = dTTP + ADP. Functionally, catalyzes the reversible transfer of high energy ATP gamma-phosphate group to L-arginine. Has nucleoside diphosphate kinase-like activity toward dTDP. Binds and phosphorylates dTDP using ATP as a phosphate donor. Does not phosphorylate dADP, dCDP, dGDP, dTMP or thymidine. This chain is Arginine kinase Lit v 2.0101, found in Penaeus vannamei (Whiteleg shrimp).